The sequence spans 75 residues: ATP synthase subunit c (75 aa).

The next 2 helical transmembrane spans lie at 8 to 28 (FIAIGLAVFGMLGAGLGIANI) and 52 to 72 (IGAAMVEIMGLLAFVLAMLLI).

Belongs to the ATPase C chain family. In terms of assembly, F-type ATPases have 2 components, F(1) - the catalytic core - and F(0) - the membrane proton channel. F(1) has five subunits: alpha(3), beta(3), gamma(1), delta(1), epsilon(1). F(0) has three main subunits: a(1), b(2) and c(10-14). The alpha and beta chains form an alternating ring which encloses part of the gamma chain. F(1) is attached to F(0) by a central stalk formed by the gamma and epsilon chains, while a peripheral stalk is formed by the delta and b chains.

It localises to the cell membrane. In terms of biological role, f(1)F(0) ATP synthase produces ATP from ADP in the presence of a proton or sodium gradient. F-type ATPases consist of two structural domains, F(1) containing the extramembraneous catalytic core and F(0) containing the membrane proton channel, linked together by a central stalk and a peripheral stalk. During catalysis, ATP synthesis in the catalytic domain of F(1) is coupled via a rotary mechanism of the central stalk subunits to proton translocation. Functionally, key component of the F(0) channel; it plays a direct role in translocation across the membrane. A homomeric c-ring of between 10-14 subunits forms the central stalk rotor element with the F(1) delta and epsilon subunits. The sequence is that of ATP synthase subunit c from Wolbachia pipientis wMel.